The sequence spans 103 residues: Large ribosomal subunit protein bL21 (103 aa).

The protein belongs to the bacterial ribosomal protein bL21 family. Part of the 50S ribosomal subunit. Contacts protein L20.

Its function is as follows. This protein binds to 23S rRNA in the presence of protein L20. This Sodalis glossinidius (strain morsitans) protein is Large ribosomal subunit protein bL21.